The following is a 270-amino-acid chain: Formamidopyrimidine-DNA glycosylase (270 aa).

Residue proline 2 is the Schiff-base intermediate with DNA of the active site. Residue glutamate 3 is the Proton donor of the active site. Catalysis depends on lysine 59, which acts as the Proton donor; for beta-elimination activity. Positions 91, 110, and 151 each coordinate DNA. An FPG-type zinc finger spans residues 236 to 270 (RVYGRDKEPCVTCGQQVKSKVLGGRNTFWCSRCQK). Residue arginine 260 is the Proton donor; for delta-elimination activity of the active site.

The protein belongs to the FPG family. In terms of assembly, monomer. Zn(2+) serves as cofactor.

The enzyme catalyses Hydrolysis of DNA containing ring-opened 7-methylguanine residues, releasing 2,6-diamino-4-hydroxy-5-(N-methyl)formamidopyrimidine.. It catalyses the reaction 2'-deoxyribonucleotide-(2'-deoxyribose 5'-phosphate)-2'-deoxyribonucleotide-DNA = a 3'-end 2'-deoxyribonucleotide-(2,3-dehydro-2,3-deoxyribose 5'-phosphate)-DNA + a 5'-end 5'-phospho-2'-deoxyribonucleoside-DNA + H(+). Functionally, involved in base excision repair of DNA damaged by oxidation or by mutagenic agents. Acts as a DNA glycosylase that recognizes and removes damaged bases. Has a preference for oxidized purines, such as 7,8-dihydro-8-oxoguanine (8-oxoG). Has AP (apurinic/apyrimidinic) lyase activity and introduces nicks in the DNA strand. Cleaves the DNA backbone by beta-delta elimination to generate a single-strand break at the site of the removed base with both 3'- and 5'-phosphates. In Bdellovibrio bacteriovorus (strain ATCC 15356 / DSM 50701 / NCIMB 9529 / HD100), this protein is Formamidopyrimidine-DNA glycosylase.